Here is a 297-residue protein sequence, read N- to C-terminus: Nucleotide-binding protein BMA10229_A1510 (297 aa).

Position 8–15 (8–15 (GISGSGKS)) interacts with ATP. 57 to 60 (DARS) is a GTP binding site.

The protein belongs to the RapZ-like family.

Displays ATPase and GTPase activities. The sequence is that of Nucleotide-binding protein BMA10229_A1510 from Burkholderia mallei (strain NCTC 10229).